We begin with the raw amino-acid sequence, 608 residues long: MWRLPGRAALRGVRSVVEQRSPAEATTHEAVRAMERAVVRCVPSEPKLSLSFALADGSHKNMQRDQSEPLGRALSRIATNALKGHAKVAAAKKSRKNRAHSSGGAACAATGSEPAATCEPVVKLYYREEAVAEDVLNVDAWQDGAVLQIGDVKYKVERNPPAFTELQLPRYIMAGFPVCPKLGLEFGDPASSVFRWYKEVKPGAAEPGDSGLASSSHSLQSSAWIETGVDERVYTPCNADIGLRLKLHCTPGNGQRFGPSRELESVCPVEAGPGTCTFDHRHLYTKKVTEDSFIRTVSYNILADTYAQTEFSRTVLYPYCAPYALELDYRQNLIQKELTGYNADLICLQEVDRAVFSDSLVPALEAFGLEGVFRIKQHEGLATFYRKSKFRLLSQHDISFQEALKSDPLHKELLEKLALNPLAQEKVLQRSSVLQISVLQSTTDSSKKICVANTHLYWHPKGGYIRLIQMAAALVHIRHVSCDLYPGIPVIFCGDFNSTPSTGMYHFVINGSVPEDHEDWASNGEEERCGMSLTHCFKLKSACGEPAYTNYVGGFHGCLDYIFIDLNALEVEQVIPLPSHEEVTTHQALPSVSHPSDHIALVCDLKWK.

The N-terminal 16 residues, 1-16 (MWRLPGRAALRGVRSV), are a transit peptide targeting the mitochondrion. A disordered region spans residues 91–111 (AKKSRKNRAHSSGGAACAATG). The segment covering 100–111 (HSSGGAACAATG) has biased composition (low complexity). At Ser216 the chain carries Phosphoserine. Mg(2+)-binding residues include Glu350, Asp495, and Asn497. Asp495 functions as the Proton donor/acceptor in the catalytic mechanism.

Belongs to the CCR4/nocturin family. Requires Mg(2+) as cofactor.

It is found in the mitochondrion matrix. It catalyses the reaction Exonucleolytic cleavage of poly(A) to 5'-AMP.. Functionally, enzyme that cleaves 2',5'-phosphodiester bond linking adenosines of the 5'-triphosphorylated oligoadenylates, triphosphorylated oligoadenylates referred as 2-5A modulates the 2-5A system. Degrades triphosphorylated 2-5A to produce AMP and ATP. Also cleaves 3',5'-phosphodiester bond of oligoadenylates. Plays a role as a negative regulator of the 2-5A system that is one of the major pathways for antiviral and antitumor functions induced by interferons (IFNs). Suppression of this enzyme increases cellular 2-5A levels and decreases viral replication in cultured small-airway epithelial cells. This chain is 2',5'-phosphodiesterase 12 (Pde12), found in Rattus norvegicus (Rat).